An 85-amino-acid chain; its full sequence is Small ribosomal subunit protein uS17 (85 aa).

It belongs to the universal ribosomal protein uS17 family. As to quaternary structure, part of the 30S ribosomal subunit.

Functionally, one of the primary rRNA binding proteins, it binds specifically to the 5'-end of 16S ribosomal RNA. The sequence is that of Small ribosomal subunit protein uS17 from Geobacter metallireducens (strain ATCC 53774 / DSM 7210 / GS-15).